The following is a 316-amino-acid chain: BTB/POZ domain-containing adapter for CUL3-mediated RhoA degradation protein 2 (316 aa).

The BTB domain occupies lysine 28–glutamine 96. Residues glutamate 268–proline 279 show a composition bias toward polar residues. A disordered region spans residues glutamate 268–glutamate 287. A Phosphoserine modification is found at serine 278. Residue serine 280 is modified to Phosphoserine; by CK2.

Belongs to the BACURD family. As to quaternary structure, component of the BCR(TNFAIP1) E3 ubiquitin ligase complex, at least composed of CUL3, TNFAIP1/BACURD2 and RBX1. Interacts with RHOA; with a preference for RhoA-GDP. Interacts with RHOB. Interacts with CSNK2B. Interacts with PCNA. Post-translationally, phosphorylation at Ser-280 by CK2 facilitates the nucleus localization and increases interaction with PCNA.

The protein localises to the cytoplasm. The protein resides in the nucleus. Its subcellular location is the endosome. It functions in the pathway protein modification; protein ubiquitination. Substrate-specific adapter of a BCR (BTB-CUL3-RBX1) E3 ubiquitin-protein ligase complex involved in regulation of cytoskeleton structure. The BCR(TNFAIP1) E3 ubiquitin ligase complex mediates the ubiquitination of RHOA, leading to its degradation by the proteasome, thereby regulating the actin cytoskeleton and cell migration. Its interaction with RHOB may regulate apoptosis. May enhance the PCNA-dependent DNA polymerase delta activity. The sequence is that of BTB/POZ domain-containing adapter for CUL3-mediated RhoA degradation protein 2 (Tnfaip1) from Rattus norvegicus (Rat).